We begin with the raw amino-acid sequence, 352 residues long: tRNA N6-adenosine threonylcarbamoyltransferase (352 aa).

Fe cation-binding residues include H111 and H115. Substrate-binding positions include 133 to 137, D166, G179, and N275; that span reads LASGG. Position 300 (D300) interacts with Fe cation.

The protein belongs to the KAE1 / TsaD family. The cofactor is Fe(2+).

The protein localises to the cytoplasm. It carries out the reaction L-threonylcarbamoyladenylate + adenosine(37) in tRNA = N(6)-L-threonylcarbamoyladenosine(37) in tRNA + AMP + H(+). Its function is as follows. Required for the formation of a threonylcarbamoyl group on adenosine at position 37 (t(6)A37) in tRNAs that read codons beginning with adenine. Is involved in the transfer of the threonylcarbamoyl moiety of threonylcarbamoyl-AMP (TC-AMP) to the N6 group of A37, together with TsaE and TsaB. TsaD likely plays a direct catalytic role in this reaction. This chain is tRNA N6-adenosine threonylcarbamoyltransferase, found in Treponema pallidum (strain Nichols).